The following is a 215-amino-acid chain: MATDYQDITIAFAGICQAATLVQQFANKGVADRAVFSSTIKSLLVTQPQSTLAVYDGNIAHLTMGLATVQAQMGGGNGKLDTEIGRYWINILALSQKLNKDPVAKSQLIQRLKQIERQLSLYDNDIMADQIIANLAAIYSEIISPLGSKIQVLGLQDYLVRPDIQHKVRASLLAGVRAGILWQQVGGSRWQFLFSRKKIFNQAKLFYKDFELSSD.

It belongs to the HflD family.

Its subcellular location is the cytoplasm. The protein resides in the cell inner membrane. This Haemophilus ducreyi (strain 35000HP / ATCC 700724) protein is High frequency lysogenization protein HflD homolog.